The sequence spans 144 residues: 6,7-dimethyl-8-ribityllumazine synthase (144 aa).

5-amino-6-(D-ribitylamino)uracil contacts are provided by residues Phe-21, 56–58 (AYE), and 80–82 (AVI). Residue 85–86 (GT) participates in (2S)-2-hydroxy-3-oxobutyl phosphate binding. His-88 functions as the Proton donor in the catalytic mechanism. Position 113 (Phe-113) interacts with 5-amino-6-(D-ribitylamino)uracil. A (2S)-2-hydroxy-3-oxobutyl phosphate-binding site is contributed by Arg-127.

Belongs to the DMRL synthase family. As to quaternary structure, forms an icosahedral capsid composed of 60 subunits, arranged as a dodecamer of pentamers.

The catalysed reaction is (2S)-2-hydroxy-3-oxobutyl phosphate + 5-amino-6-(D-ribitylamino)uracil = 6,7-dimethyl-8-(1-D-ribityl)lumazine + phosphate + 2 H2O + H(+). It functions in the pathway cofactor biosynthesis; riboflavin biosynthesis; riboflavin from 2-hydroxy-3-oxobutyl phosphate and 5-amino-6-(D-ribitylamino)uracil: step 1/2. Functionally, catalyzes the formation of 6,7-dimethyl-8-ribityllumazine by condensation of 5-amino-6-(D-ribitylamino)uracil with 3,4-dihydroxy-2-butanone 4-phosphate. This is the penultimate step in the biosynthesis of riboflavin. This chain is 6,7-dimethyl-8-ribityllumazine synthase (ribH), found in Photobacterium leiognathi.